Here is a 353-residue protein sequence, read N- to C-terminus: MHVADFSFNLPKNLIARYPLPERSTCRLLSLDGHSGAIKHNVFTDILDQLSLGDLLVFNNTRVIPARLFGRKISGGKVEVLVERVLDNQRVLAHIRASKTPKIDTLLLLGDNENIRAIIVARHQIWFELLFDDQRDILTILNDAGHIPLPYYLDRPDYSLDRELYQTVYSQHPGAIAAPTAGLHFDQQLLSALRVKGVEMVFITLHVGTGTFQPIKVKKIEHHHMYSEYTEVPHTVVDAVIACKSRGNRVVAVGTTSVRSLESAIVSVSNSKHTMLAPFCGETSIFIYPGYRFRVIDALITNFHLPQSTPIMLVSAFAGYQHTFNAYREAVNLAYRFLSYGDAMFITNNNSVF.

Belongs to the QueA family. In terms of assembly, monomer.

Its subcellular location is the cytoplasm. It carries out the reaction 7-aminomethyl-7-carbaguanosine(34) in tRNA + S-adenosyl-L-methionine = epoxyqueuosine(34) in tRNA + adenine + L-methionine + 2 H(+). It functions in the pathway tRNA modification; tRNA-queuosine biosynthesis. In terms of biological role, transfers and isomerizes the ribose moiety from AdoMet to the 7-aminomethyl group of 7-deazaguanine (preQ1-tRNA) to give epoxyqueuosine (oQ-tRNA). The sequence is that of S-adenosylmethionine:tRNA ribosyltransferase-isomerase from Baumannia cicadellinicola subsp. Homalodisca coagulata.